The primary structure comprises 333 residues: Phenylalanine--tRNA ligase alpha subunit (333 aa).

Glu254 contacts Mg(2+).

The protein belongs to the class-II aminoacyl-tRNA synthetase family. Phe-tRNA synthetase alpha subunit type 1 subfamily. As to quaternary structure, tetramer of two alpha and two beta subunits. Requires Mg(2+) as cofactor.

The protein resides in the cytoplasm. It carries out the reaction tRNA(Phe) + L-phenylalanine + ATP = L-phenylalanyl-tRNA(Phe) + AMP + diphosphate + H(+). This chain is Phenylalanine--tRNA ligase alpha subunit, found in Xylella fastidiosa (strain M23).